Consider the following 41-residue polypeptide: MFMPASKPDLGKKGRLLKMEIESLDYFAAICTDYFVRKGGS.

This is an uncharacterized protein from Archaeoglobus fulgidus (strain ATCC 49558 / DSM 4304 / JCM 9628 / NBRC 100126 / VC-16).